Here is a 359-residue protein sequence, read N- to C-terminus: Fructose-bisphosphate aldolase, cytoplasmic isozyme (359 aa).

R52 and K142 together coordinate substrate. E184 acts as the Proton acceptor in catalysis. The Schiff-base intermediate with dihydroxyacetone-P role is filled by K226.

It belongs to the class I fructose-bisphosphate aldolase family.

Its subcellular location is the cytoplasm. It catalyses the reaction beta-D-fructose 1,6-bisphosphate = D-glyceraldehyde 3-phosphate + dihydroxyacetone phosphate. Its pathway is carbohydrate degradation; glycolysis; D-glyceraldehyde 3-phosphate and glycerone phosphate from D-glucose: step 4/4. This is Fructose-bisphosphate aldolase, cytoplasmic isozyme (ALDC) from Cicer arietinum (Chickpea).